Reading from the N-terminus, the 97-residue chain is MNLAVQDVVKRPLITEKAERAREASRQYAFEVHRDATKIQVKQAVEKLFNVHVLDVRTAIARGKNKRVGRNVGRRPNWKKAYVTLKEGDTIALFEGT.

It belongs to the universal ribosomal protein uL23 family. Part of the 50S ribosomal subunit. Contacts protein L29, and trigger factor when it is bound to the ribosome.

Functionally, one of the early assembly proteins it binds 23S rRNA. One of the proteins that surrounds the polypeptide exit tunnel on the outside of the ribosome. Forms the main docking site for trigger factor binding to the ribosome. This chain is Large ribosomal subunit protein uL23, found in Anaeromyxobacter dehalogenans (strain 2CP-C).